The following is a 170-amino-acid chain: 4-hydroxyphenylacetate 3-monooxygenase reductase component (170 aa).

Belongs to the non-flavoprotein flavin reductase family. HpaC subfamily. In terms of assembly, homodimer. 4-HPA 3-monooxygenase consists of a reductase component HpaC and an oxygenase component HpaB.

The catalysed reaction is a reduced flavin + NAD(+) = an oxidized flavin + NADH + 2 H(+). The protein operates within aromatic compound metabolism; 4-hydroxyphenylacetate degradation; pyruvate and succinate semialdehyde from 4-hydroxyphenylacetate: step 1/7. Its function is as follows. Catalyzes the reduction of free flavins (FMN, FAD and riboflavin) by NADH. Subsequently, the reduced flavins diffuse to the large HpaB component or to other electron acceptors such as cytochrome c and Fe(3+) ion. This Salmonella dublin protein is 4-hydroxyphenylacetate 3-monooxygenase reductase component (hpaC).